Here is a 61-residue protein sequence, read N- to C-terminus: Large ribosomal subunit protein uL30 (61 aa).

The protein belongs to the universal ribosomal protein uL30 family. As to quaternary structure, part of the 50S ribosomal subunit.

This Francisella tularensis subsp. tularensis (strain FSC 198) protein is Large ribosomal subunit protein uL30.